The primary structure comprises 361 residues: UDP-N-acetylglucosamine--N-acetylmuramyl-(pentapeptide) pyrophosphoryl-undecaprenol N-acetylglucosamine transferase (361 aa).

UDP-N-acetyl-alpha-D-glucosamine-binding positions include 11–13, asparagine 120, arginine 161, serine 188, and glutamine 282; that span reads TGG.

The protein belongs to the glycosyltransferase 28 family. MurG subfamily.

The protein localises to the cell inner membrane. The enzyme catalyses di-trans,octa-cis-undecaprenyl diphospho-N-acetyl-alpha-D-muramoyl-L-alanyl-D-glutamyl-meso-2,6-diaminopimeloyl-D-alanyl-D-alanine + UDP-N-acetyl-alpha-D-glucosamine = di-trans,octa-cis-undecaprenyl diphospho-[N-acetyl-alpha-D-glucosaminyl-(1-&gt;4)]-N-acetyl-alpha-D-muramoyl-L-alanyl-D-glutamyl-meso-2,6-diaminopimeloyl-D-alanyl-D-alanine + UDP + H(+). It participates in cell wall biogenesis; peptidoglycan biosynthesis. Functionally, cell wall formation. Catalyzes the transfer of a GlcNAc subunit on undecaprenyl-pyrophosphoryl-MurNAc-pentapeptide (lipid intermediate I) to form undecaprenyl-pyrophosphoryl-MurNAc-(pentapeptide)GlcNAc (lipid intermediate II). The polypeptide is UDP-N-acetylglucosamine--N-acetylmuramyl-(pentapeptide) pyrophosphoryl-undecaprenol N-acetylglucosamine transferase (Prochlorococcus marinus (strain MIT 9303)).